A 91-amino-acid polypeptide reads, in one-letter code: ATP synthase epsilon chain (91 aa).

It belongs to the ATPase epsilon chain family. As to quaternary structure, F-type ATPases have 2 components, CF(1) - the catalytic core - and CF(0) - the membrane proton channel. CF(1) has five subunits: alpha(3), beta(3), gamma(1), delta(1), epsilon(1). CF(0) has three main subunits: a, b and c.

The protein localises to the cell membrane. In terms of biological role, produces ATP from ADP in the presence of a proton gradient across the membrane. This chain is ATP synthase epsilon chain (atpC), found in Micrococcus luteus (strain ATCC 4698 / DSM 20030 / JCM 1464 / CCM 169 / CCUG 5858 / IAM 1056 / NBRC 3333 / NCIMB 9278 / NCTC 2665 / VKM Ac-2230) (Micrococcus lysodeikticus).